Reading from the N-terminus, the 487-residue chain is Glutamate--tRNA ligase 2 (487 aa).

A 'HIGH' region motif is present at residues 24–34 (PSPTGFLHIGG). The short motif at 258 to 262 (KLSKR) is the 'KMSKS' region element. Residue Lys261 participates in ATP binding.

Belongs to the class-I aminoacyl-tRNA synthetase family. Glutamate--tRNA ligase type 1 subfamily. As to quaternary structure, monomer.

It is found in the cytoplasm. It carries out the reaction tRNA(Glu) + L-glutamate + ATP = L-glutamyl-tRNA(Glu) + AMP + diphosphate. In terms of biological role, catalyzes the attachment of glutamate to tRNA(Glu) in a two-step reaction: glutamate is first activated by ATP to form Glu-AMP and then transferred to the acceptor end of tRNA(Glu). This Novosphingobium aromaticivorans (strain ATCC 700278 / DSM 12444 / CCUG 56034 / CIP 105152 / NBRC 16084 / F199) protein is Glutamate--tRNA ligase 2.